Here is a 324-residue protein sequence, read N- to C-terminus: Anthranilate phosphoribosyltransferase (324 aa).

Residues glycine 72, 75-76, serine 80, 82-85, 99-107, and serine 111 contribute to the 5-phospho-alpha-D-ribose 1-diphosphate site; these read GD, NVST, and KHGNVSITS. Glycine 72 is an anthranilate binding site. Residue serine 84 coordinates Mg(2+). Asparagine 102 is an anthranilate binding site. Residue arginine 157 participates in anthranilate binding. Mg(2+) is bound by residues aspartate 215 and glutamate 216.

This sequence belongs to the anthranilate phosphoribosyltransferase family. Homodimer. It depends on Mg(2+) as a cofactor.

It catalyses the reaction N-(5-phospho-beta-D-ribosyl)anthranilate + diphosphate = 5-phospho-alpha-D-ribose 1-diphosphate + anthranilate. The protein operates within amino-acid biosynthesis; L-tryptophan biosynthesis; L-tryptophan from chorismate: step 2/5. Functionally, catalyzes the transfer of the phosphoribosyl group of 5-phosphorylribose-1-pyrophosphate (PRPP) to anthranilate to yield N-(5'-phosphoribosyl)-anthranilate (PRA). The polypeptide is Anthranilate phosphoribosyltransferase (Pyrococcus abyssi (strain GE5 / Orsay)).